A 416-amino-acid chain; its full sequence is Peptide chain release factor subunit 1 (416 aa).

The protein belongs to the eukaryotic release factor 1 family. As to quaternary structure, heterodimer of two subunits, one of which binds GTP.

It is found in the cytoplasm. Directs the termination of nascent peptide synthesis (translation) in response to the termination codons UAA, UAG and UGA. In Halobacterium salinarum (strain ATCC 29341 / DSM 671 / R1), this protein is Peptide chain release factor subunit 1.